A 128-amino-acid chain; its full sequence is NADH dehydrogenase [ubiquinone] 1 beta subcomplex subunit 6 (128 aa).

N-acetylserine is present on S2. K24 is modified (N6-acetyllysine). Residues 64-86 (TYRHSIFAFTHVLIPVWIIHYYL) form a helical membrane-spanning segment.

It belongs to the complex I NDUFB6 subunit family. In terms of assembly, complex I is composed of 45 different subunits.

The protein localises to the mitochondrion inner membrane. Functionally, accessory subunit of the mitochondrial membrane respiratory chain NADH dehydrogenase (Complex I), that is believed not to be involved in catalysis. Complex I functions in the transfer of electrons from NADH to the respiratory chain. The immediate electron acceptor for the enzyme is believed to be ubiquinone. The polypeptide is NADH dehydrogenase [ubiquinone] 1 beta subcomplex subunit 6 (NDUFB6) (Bos taurus (Bovine)).